A 400-amino-acid chain; its full sequence is uncharacterized protein (400 aa).

It to M.jannaschii MJ1544 and MJ1637.

This is an uncharacterized protein from Haemophilus influenzae (strain ATCC 51907 / DSM 11121 / KW20 / Rd).